Here is an 882-residue protein sequence, read N- to C-terminus: DNA mismatch repair protein MutS (882 aa).

Position 635-642 (635-642) interacts with ATP; that stretch reads GPNMGGKS.

This sequence belongs to the DNA mismatch repair MutS family.

Functionally, this protein is involved in the repair of mismatches in DNA. It is possible that it carries out the mismatch recognition step. This protein has a weak ATPase activity. This chain is DNA mismatch repair protein MutS, found in Janthinobacterium sp. (strain Marseille) (Minibacterium massiliensis).